We begin with the raw amino-acid sequence, 217 residues long: Octanoyltransferase (217 aa).

The BPL/LPL catalytic domain maps to 32–207 (NDSPDELWIV…TLSQLLGYQH (176 aa)). Residues 71–78 (RGGQVTYH), 138–140 (SLG), and 151–153 (GLA) each bind substrate. Cys-169 serves as the catalytic Acyl-thioester intermediate.

It belongs to the LipB family.

It is found in the cytoplasm. The catalysed reaction is octanoyl-[ACP] + L-lysyl-[protein] = N(6)-octanoyl-L-lysyl-[protein] + holo-[ACP] + H(+). It functions in the pathway protein modification; protein lipoylation via endogenous pathway; protein N(6)-(lipoyl)lysine from octanoyl-[acyl-carrier-protein]: step 1/2. In terms of biological role, catalyzes the transfer of endogenously produced octanoic acid from octanoyl-acyl-carrier-protein onto the lipoyl domains of lipoate-dependent enzymes. Lipoyl-ACP can also act as a substrate although octanoyl-ACP is likely to be the physiological substrate. The chain is Octanoyltransferase from Shewanella oneidensis (strain ATCC 700550 / JCM 31522 / CIP 106686 / LMG 19005 / NCIMB 14063 / MR-1).